We begin with the raw amino-acid sequence, 152 residues long: 6,7-dimethyl-8-ribityllumazine synthase (152 aa).

5-amino-6-(D-ribitylamino)uracil is bound by residues Phe21, 55–57, and 79–81; these read AFE and AVI. A (2S)-2-hydroxy-3-oxobutyl phosphate-binding site is contributed by 84–85; that stretch reads AT. Residue His87 is the Proton donor of the active site. Phe112 is a binding site for 5-amino-6-(D-ribitylamino)uracil. Residue Arg126 coordinates (2S)-2-hydroxy-3-oxobutyl phosphate.

This sequence belongs to the DMRL synthase family. As to quaternary structure, forms an icosahedral capsid composed of 60 subunits, arranged as a dodecamer of pentamers.

It catalyses the reaction (2S)-2-hydroxy-3-oxobutyl phosphate + 5-amino-6-(D-ribitylamino)uracil = 6,7-dimethyl-8-(1-D-ribityl)lumazine + phosphate + 2 H2O + H(+). It functions in the pathway cofactor biosynthesis; riboflavin biosynthesis; riboflavin from 2-hydroxy-3-oxobutyl phosphate and 5-amino-6-(D-ribitylamino)uracil: step 1/2. Functionally, catalyzes the formation of 6,7-dimethyl-8-ribityllumazine by condensation of 5-amino-6-(D-ribitylamino)uracil with 3,4-dihydroxy-2-butanone 4-phosphate. This is the penultimate step in the biosynthesis of riboflavin. This is 6,7-dimethyl-8-ribityllumazine synthase from Exiguobacterium sibiricum (strain DSM 17290 / CCUG 55495 / CIP 109462 / JCM 13490 / 255-15).